The sequence spans 983 residues: Alanine--tRNA ligase, mitochondrial (983 aa).

The N-terminal 24 residues, 1–24 (MTSTTGLRNLTLSFKKQLTTSTRT), are a transit peptide targeting the mitochondrion. The residue at position 504 (S504) is a Phosphoserine. Positions 625, 629, 744, and 748 each coordinate Zn(2+). S975 is subject to Phosphoserine.

This sequence belongs to the class-II aminoacyl-tRNA synthetase family. Monomer. Zn(2+) is required as a cofactor.

It localises to the cytoplasm. The protein resides in the mitochondrion. It carries out the reaction tRNA(Ala) + L-alanine + ATP = L-alanyl-tRNA(Ala) + AMP + diphosphate. Catalyzes the attachment of alanine to tRNA(Ala) in a two-step reaction: alanine is first activated by ATP to form Ala-AMP and then transferred to the acceptor end of tRNA(Ala). Also edits incorrectly charged tRNA(Ala) via its editing domain. The sequence is that of Alanine--tRNA ligase, mitochondrial from Saccharomyces cerevisiae (strain ATCC 204508 / S288c) (Baker's yeast).